Reading from the N-terminus, the 151-residue chain is Decarboxylase nsrE (151 aa).

Residues 31–126 (AGMTEEDYHN…VGDHENFADT (96 aa)) enclose the EthD domain.

It belongs to the tpcK family.

It catalyses the reaction atrochrysone carboxylate + H(+) = atrochrysone + CO2. It participates in secondary metabolite biosynthesis. In terms of biological role, decarboxylase; part of the gene cluster that mediates the biosynthesis of the tetrahydroxanthone dimer neosartorin, which exhibits antibacterial activity. The two different monomeric units appear to be synthesized by the same set of enzymes, among which the Baeyer-Villiger monooxygenase nsrF is the key enzyme for the divergence of the biosynthetic routes. The pathway begins with the synthesis of atrochrysone thioester by the polyketide synthase nsrB. The atrochrysone carboxyl ACP thioesterase nsrC then breaks the thioester bond and releases the atrochrysone carboxylic acid from AacuL. Atrochrysone carboxylic acid is decarboxylated by the decarboxylase nsrE, and oxidized by the anthrone oxygenase nsrD to yield emodin. Emodin is then reduced to emodin hydroquinone by the oxidoreductase nsrR. A-ring reduction by the short chain dehydrogenase nsrJ, dehydration by the scytalone dehydratase-like protein nsrI and probable spontaneous re-oxidation, results in overall deoxygenation to chrysophanol. The Baeyer-Villiger monooxygenase nsrF accepts chrysophanol as a substrate to insert one oxygen atom at two different positions to yield the precursors of both monomric units. NsrF is promiscuous/flexible in interacting with the 2 (non methylated and methylated) aromatic rings of chrysophanol, thus diverging the biosynthetic pathway at this point. After the hydrolysis of the lactones, methylesterification by the methyltransferase nsrG yields respectively moniliphenone and 2,2',6'-trihydroxy-4-methyl-6-methoxya-cyldiphenylmethanone. The next steps are the hydroxylation by the FAD-dependent monooxygenase nsrK, followed by isomerization by the monooxygenase nsrQ. The short chain dehydrogenase/reductase nsrO then catalyzes the C-5 ketoreduction to give the xanthone skeleton of blennolide C and 5-acetylblennolide A. The acetyltransferase nsrL has a strict substrate specificity and uses only blennolide A but not blennolide C to yield 5-acetylblennolide A as the single-acetylated product. In the final step of the biosynthesis, the heterodimerization of the 2 xanthones, blennolide C and 5-acetylblennolide A, is catalyzed by the cytochrome P450 monooxygenase nsrP. NsrP can utilize at least three different xanthones as its substrates to perform the dimerization reaction. The protein is Decarboxylase nsrE of Aspergillus novofumigatus (strain IBT 16806).